The primary structure comprises 228 residues: L-ribulose-5-phosphate 4-epimerase UlaF (228 aa).

Substrate contacts are provided by residues 26 to 27 (GN), 43 to 44 (SG), and 72 to 73 (SS). Residues D74, H93, and H95 each contribute to the Zn(2+) site. The active-site Proton donor/acceptor is the D118. Residue H167 participates in Zn(2+) binding. Y225 acts as the Proton donor/acceptor in catalysis.

This sequence belongs to the aldolase class II family. AraD/FucA subfamily. Requires Zn(2+) as cofactor.

It carries out the reaction L-ribulose 5-phosphate = D-xylulose 5-phosphate. It participates in cofactor degradation; L-ascorbate degradation; D-xylulose 5-phosphate from L-ascorbate: step 4/4. Functionally, catalyzes the isomerization of L-ribulose 5-phosphate to D-xylulose 5-phosphate. Is involved in the anaerobic L-ascorbate utilization. The sequence is that of L-ribulose-5-phosphate 4-epimerase UlaF from Escherichia coli (strain ATCC 8739 / DSM 1576 / NBRC 3972 / NCIMB 8545 / WDCM 00012 / Crooks).